We begin with the raw amino-acid sequence, 332 residues long: 3-ketodihydrosphingosine reductase (332 aa).

Residues 1–25 (MLLLAAAGLVAFVLLLYMVSPLISP) form the signal peptide. Topologically, residues 26 to 270 (KPLALPGAHV…GNFNSSIGSD (245 aa)) are cytoplasmic. NADPH is bound by residues Gly-39, Ser-41, Ser-42, Gly-43, Arg-64, Lys-68, and Asp-93. The short motif at 39–43 (GGSSG) is the GXSXG element. Ser-172 (proton donor) is an active-site residue. Catalysis depends on Tyr-186, which acts as the Proton acceptor. Positions 186 and 190 each coordinate NADP(+). Catalysis depends on Lys-190, which acts as the Lowers pKa of active site Tyr. The helical transmembrane segment at 271–291 (GYMLSSLTCGMAPVTSITEGL) threads the bilayer. Topologically, residues 292–293 (QQ) are lumenal. A helical membrane pass occupies residues 294–314 (VVTMGLFRTIALFYLGSFDNI). The Cytoplasmic portion of the chain corresponds to 315–332 (VRRCMVQKAKPEVVDKTA).

Belongs to the short-chain dehydrogenases/reductases (SDR) family.

It is found in the endoplasmic reticulum membrane. It carries out the reaction sphinganine + NADP(+) = 3-oxosphinganine + NADPH + H(+). The protein operates within lipid metabolism; sphingolipid metabolism. Catalyzes the reduction of 3'-oxosphinganine (3-ketodihydrosphingosine/KDS) to sphinganine (dihydrosphingosine/DHS), the second step of de novo sphingolipid biosynthesis. The polypeptide is 3-ketodihydrosphingosine reductase (Kdsr) (Mus musculus (Mouse)).